The primary structure comprises 254 residues: Cytokine-inducible SH2-containing protein (254 aa).

The SH2 domain maps to 82–188 (WYWGSITASE…ATTPALPTPK (107 aa)). The tract at residues 171–195 (TRSDSPDLATTPALPTPKEDAPGDP) is disordered. Residues 205–253 (KLVQPFVRRSSTRSLQHLCRLVINRLVVDVDCLPLPRRMADYLRQYPFQ) enclose the SOCS box domain.

As to quaternary structure, stably associated with the tyrosine-phosphorylated IL3 receptor beta chain and tyrosine-phosphorylated EPO receptor (EPOR).

It participates in protein modification; protein ubiquitination. SOCS family proteins form part of a classical negative feedback system that regulates cytokine signal transduction. CIS is involved in the negative regulation of cytokines that signal through the JAK-STAT5 pathway such as erythropoietin, prolactin and interleukin 3 (IL3) receptor. Inhibits STAT5 trans-activation by suppressing its tyrosine phosphorylation. May be a substrate recognition component of a SCF-like ECS (Elongin BC-CUL2/5-SOCS-box protein) E3 ubiquitin-protein ligase complex which mediates the ubiquitination and subsequent proteasomal degradation of target proteins. The polypeptide is Cytokine-inducible SH2-containing protein (CISH) (Bos taurus (Bovine)).